A 202-amino-acid polypeptide reads, in one-letter code: Ribosome maturation factor RimP (202 aa).

It belongs to the RimP family.

The protein localises to the cytoplasm. In terms of biological role, required for maturation of 30S ribosomal subunits. This chain is Ribosome maturation factor RimP, found in Polaromonas naphthalenivorans (strain CJ2).